Here is a 315-residue protein sequence, read N- to C-terminus: Outer membrane protease OmpP (315 aa).

The signal sequence occupies residues 1–23 (MQTKLLAIMLAAPVVFSSQEASA). Catalysis depends on residues Asp-103, Asp-105, Asp-230, and His-232.

Belongs to the peptidase A26 family.

It localises to the cell outer membrane. Its function is as follows. Protease; also acts as a receptor for bacteriophage Ox2. The protein is Outer membrane protease OmpP (ompP) of Escherichia coli (strain K12).